Reading from the N-terminus, the 1276-residue chain is Probable outer membrane protein pmp6 (1276 aa).

The N-terminal stretch at 1 to 23 (MKYSLPWLLTSSALVFSLHPLMA) is a signal peptide. Positions 981–1276 (DAPSHPGIWI…NANCGTRYSF (296 aa)) constitute an Autotransporter domain.

It belongs to the PMP outer membrane protein family.

The protein localises to the secreted. Its subcellular location is the cell wall. It is found in the cell outer membrane. This is Probable outer membrane protein pmp6 (pmp6) from Chlamydia pneumoniae (Chlamydophila pneumoniae).